The following is a 451-amino-acid chain: UPF0210 protein lin0538 (451 aa).

The protein belongs to the UPF0210 family. As to quaternary structure, homodimer.

This is UPF0210 protein lin0538 from Listeria innocua serovar 6a (strain ATCC BAA-680 / CLIP 11262).